The chain runs to 56 residues: Large ribosomal subunit protein bL32 (56 aa).

The protein belongs to the bacterial ribosomal protein bL32 family.

In Edwardsiella ictaluri (strain 93-146), this protein is Large ribosomal subunit protein bL32.